Consider the following 432-residue polypeptide: MRVVVLGSGVVGVTSAWYLCQAGHEVTVIDREPGSALETSAANAGQISPGYAAPWAAPGVPLKAIKWMFQRHAPLAISLDGTPSQLKWMWQMLRNCDTRHYMENKGRMVRLAEYSRDCLKTLRASTGIEYEGRQGGTLQLFRTAQQYENATRDIAVLEDAGVPYQLLDASQLAQVEPALAEVAHKLTGGLRLPNDETGDCQLFTQRLAKMCEQAGVTFRYNTPVDKLLSEGGKIYGVKCGDEVIKADSYVMAFGSYSTAMLKGLLDIPVYPLKGYSLTIPVKEDNGAPVSTILDETYKIAITRFDNRIRVGGMAEIVGFNTELLQPRRETLEMVVRDLFPRGGFIEQATFWTGLRPMTPDGTPIVGRTPFKNLWTNTGHGTLGWTMACGSGQLLSDLISGRTPAIPFDDLSAARYQSGFSPSRPQHLHGAHN.

3–17 (VVVLGSGVVGVTSAW) lines the FAD pocket.

The protein belongs to the DadA oxidoreductase family. FAD is required as a cofactor.

The enzyme catalyses a D-alpha-amino acid + A + H2O = a 2-oxocarboxylate + AH2 + NH4(+). It participates in amino-acid degradation; D-alanine degradation; NH(3) and pyruvate from D-alanine: step 1/1. Functionally, oxidative deamination of D-amino acids. The sequence is that of D-amino acid dehydrogenase from Enterobacter sp. (strain 638).